A 938-amino-acid chain; its full sequence is Mediator of RNA polymerase II transcription subunit 16 (938 aa).

This sequence belongs to the Mediator complex subunit 16 family. As to quaternary structure, component of the Mediator complex.

It localises to the nucleus. Component of the Mediator complex, a coactivator involved in the regulated transcription of nearly all RNA polymerase II-dependent genes. Mediator functions as a bridge to convey information from gene-specific regulatory proteins to the basal RNA polymerase II transcription machinery. Mediator is recruited to promoters by direct interactions with regulatory proteins and serves as a scaffold for the assembly of a functional preinitiation complex with RNA polymerase II and the general transcription factors. The sequence is that of Mediator of RNA polymerase II transcription subunit 16 (SIN4) from Eremothecium gossypii (strain ATCC 10895 / CBS 109.51 / FGSC 9923 / NRRL Y-1056) (Yeast).